The sequence spans 336 residues: Fructose-1,6-bisphosphatase class 1 (336 aa).

E90, D112, L114, and D115 together coordinate Mg(2+). Substrate-binding positions include 115–118, N211, and K277; that span reads DGSS. Residue E283 participates in Mg(2+) binding.

Belongs to the FBPase class 1 family. In terms of assembly, homotetramer. Mg(2+) serves as cofactor.

It is found in the cytoplasm. The catalysed reaction is beta-D-fructose 1,6-bisphosphate + H2O = beta-D-fructose 6-phosphate + phosphate. Its pathway is carbohydrate biosynthesis; gluconeogenesis. The polypeptide is Fructose-1,6-bisphosphatase class 1 (Pseudomonas aeruginosa (strain ATCC 15692 / DSM 22644 / CIP 104116 / JCM 14847 / LMG 12228 / 1C / PRS 101 / PAO1)).